The following is a 794-amino-acid chain: Protein transport protein SEC23 G (794 aa).

4 residues coordinate Zn(2+): Cys56, Cys59, Cys78, and Cys81. Residues 56–81 are zinc finger-like; the sequence is CSRCGAVLNPYARVDYQSRIWSCPFC.

It belongs to the SEC23/SEC24 family. SEC23 subfamily. As to quaternary structure, component of the coat protein complex II (COPII), composed of at least five proteins: the Sec23/24 complex, the Sec13/31 complex and Sar1. Interacts with SEC24A.

The protein resides in the cytoplasmic vesicle. The protein localises to the COPII-coated vesicle membrane. It localises to the endoplasmic reticulum membrane. It is found in the membrane. Its function is as follows. Component of the coat protein complex II (COPII) which promotes the formation of transport vesicles from the endoplasmic reticulum (ER). The coat has two main functions, the physical deformation of the endoplasmic reticulum membrane into vesicles and the selection of cargo molecules. The protein is Protein transport protein SEC23 G of Arabidopsis thaliana (Mouse-ear cress).